The following is a 141-amino-acid chain: HTH-type transcriptional repressor NsrR (141 aa).

In terms of domain architecture, HTH rrf2-type spans 2-129 (QLTNFTDFGL…DQHTIQDMLT (128 aa)). Residues 28–51 (ITVVTETFDVSRNHMVKIINKLGQ) constitute a DNA-binding region (H-T-H motif). Residues Cys-91, Cys-96, and Cys-102 each contribute to the [2Fe-2S] cluster site.

The cofactor is [2Fe-2S] cluster.

Its function is as follows. Nitric oxide-sensitive repressor of genes involved in protecting the cell against nitrosative stress. May require iron for activity. The polypeptide is HTH-type transcriptional repressor NsrR (Aliivibrio salmonicida (strain LFI1238) (Vibrio salmonicida (strain LFI1238))).